The chain runs to 107 residues: Nucleoid-associated protein MCA1327 (107 aa).

It belongs to the YbaB/EbfC family. Homodimer.

The protein localises to the cytoplasm. The protein resides in the nucleoid. In terms of biological role, binds to DNA and alters its conformation. May be involved in regulation of gene expression, nucleoid organization and DNA protection. The sequence is that of Nucleoid-associated protein MCA1327 from Methylococcus capsulatus (strain ATCC 33009 / NCIMB 11132 / Bath).